Reading from the N-terminus, the 486-residue chain is Glutamyl-tRNA(Gln) amidotransferase subunit A (486 aa).

Active-site charge relay system residues include Lys-76 and Ser-151. Catalysis depends on Ser-175, which acts as the Acyl-ester intermediate.

It belongs to the amidase family. GatA subfamily. In terms of assembly, heterotrimer of A, B and C subunits.

The enzyme catalyses L-glutamyl-tRNA(Gln) + L-glutamine + ATP + H2O = L-glutaminyl-tRNA(Gln) + L-glutamate + ADP + phosphate + H(+). Functionally, allows the formation of correctly charged Gln-tRNA(Gln) through the transamidation of misacylated Glu-tRNA(Gln) in organisms which lack glutaminyl-tRNA synthetase. The reaction takes place in the presence of glutamine and ATP through an activated gamma-phospho-Glu-tRNA(Gln). The sequence is that of Glutamyl-tRNA(Gln) amidotransferase subunit A from Nitrosomonas europaea (strain ATCC 19718 / CIP 103999 / KCTC 2705 / NBRC 14298).